A 455-amino-acid chain; its full sequence is Bifunctional protein GlmU (455 aa).

The pyrophosphorylase stretch occupies residues 1–227; sequence MKLKAIILAA…YEEIMAVNSR (227 aa). UDP-N-acetyl-alpha-D-glucosamine-binding positions include 8 to 11, Lys-22, Gln-72, and 77 to 78; these read LAAG and GT. Asp-100 contacts Mg(2+). UDP-N-acetyl-alpha-D-glucosamine contacts are provided by Gly-137, Glu-152, Asn-167, and Asn-225. Mg(2+) is bound at residue Asn-225. The segment at 228–248 is linker; the sequence is EQLADVEAIMRRRIAKKHMAN. Positions 249-455 are N-acetyltransferase; sequence GVTIMNPEHV…WTKRKGLLKK (207 aa). 2 residues coordinate UDP-N-acetyl-alpha-D-glucosamine: Arg-330 and Lys-348. Catalysis depends on His-360, which acts as the Proton acceptor. Positions 363 and 374 each coordinate UDP-N-acetyl-alpha-D-glucosamine. Acetyl-CoA-binding positions include 383 to 384, Ser-402, Cys-420, and Arg-437; that span reads NY.

The protein in the N-terminal section; belongs to the N-acetylglucosamine-1-phosphate uridyltransferase family. This sequence in the C-terminal section; belongs to the transferase hexapeptide repeat family. As to quaternary structure, homotrimer. It depends on Mg(2+) as a cofactor.

It localises to the cytoplasm. It catalyses the reaction alpha-D-glucosamine 1-phosphate + acetyl-CoA = N-acetyl-alpha-D-glucosamine 1-phosphate + CoA + H(+). The catalysed reaction is N-acetyl-alpha-D-glucosamine 1-phosphate + UTP + H(+) = UDP-N-acetyl-alpha-D-glucosamine + diphosphate. Its pathway is nucleotide-sugar biosynthesis; UDP-N-acetyl-alpha-D-glucosamine biosynthesis; N-acetyl-alpha-D-glucosamine 1-phosphate from alpha-D-glucosamine 6-phosphate (route II): step 2/2. It participates in nucleotide-sugar biosynthesis; UDP-N-acetyl-alpha-D-glucosamine biosynthesis; UDP-N-acetyl-alpha-D-glucosamine from N-acetyl-alpha-D-glucosamine 1-phosphate: step 1/1. The protein operates within bacterial outer membrane biogenesis; LPS lipid A biosynthesis. In terms of biological role, catalyzes the last two sequential reactions in the de novo biosynthetic pathway for UDP-N-acetylglucosamine (UDP-GlcNAc). The C-terminal domain catalyzes the transfer of acetyl group from acetyl coenzyme A to glucosamine-1-phosphate (GlcN-1-P) to produce N-acetylglucosamine-1-phosphate (GlcNAc-1-P), which is converted into UDP-GlcNAc by the transfer of uridine 5-monophosphate (from uridine 5-triphosphate), a reaction catalyzed by the N-terminal domain. In Alkaliphilus oremlandii (strain OhILAs) (Clostridium oremlandii (strain OhILAs)), this protein is Bifunctional protein GlmU.